The sequence spans 79 residues: Gas vesicle protein A2 (79 aa).

Residues 9–19 form an alpha helix 1 region; that stretch reads LAEVLDRVLDK. A beta-strand 1 region spans residues 23 to 31; the sequence is VDVWARISL. The beta turn stretch occupies residues 32–34; that stretch reads VGI. Residues 35–43 are beta-strand 2; the sequence is EILTVEARV. Residues 48–67 are alpha helix 2; that stretch reads VDTFLHYAEEIAKIEQAELT.

The protein belongs to the gas vesicle GvpA family. The gas vesicle shell is 2 nm thick and consists of a single layer of this protein. It forms helical ribs nearly perpendicular to the long axis of the vesicle.

Its subcellular location is the gas vesicle shell. Gas vesicles are hollow, gas filled proteinaceous nanostructures found in several microbial planktonic microorganisms. They allow positioning of halobacteria at the optimal depth for growth in the poorly aerated shallow brine pools of their habitat. GvpA forms the gas vesicle shell. This protein can replace the p-gvpA gene in the p-vac locus and increases the critical collapse pressure (CCP) of hybrid gas vesicles from 0.66 MPa to 0.90 MPa. In stationary phase gas vesicles about 30 times more GvpA1 is found than GvpA2. In terms of biological role, expression of 2 c-vac DNA fragments containing 2 divergently transcribed regions (gvpE-gvpF-gvpG-gvpH-gvpI-gvpJ-gvpK-gvpL-gvpM and gvpA-gvpC-gvpN-gvpO) allows H.volcanii to produce gas vesicles. All site-directed mutagenesis is tested in H.volcanii. The sequence is that of Gas vesicle protein A2 from Halobacterium salinarum (strain ATCC 700922 / JCM 11081 / NRC-1) (Halobacterium halobium).